The primary structure comprises 426 residues: D-tagatose-1,6-bisphosphate aldolase subunit KbaZ (426 aa).

Belongs to the GatZ/KbaZ family. KbaZ subfamily. Forms a complex with KbaY.

The protein operates within carbohydrate metabolism; D-tagatose 6-phosphate degradation; D-glyceraldehyde 3-phosphate and glycerone phosphate from D-tagatose 6-phosphate: step 2/2. Functionally, component of the tagatose-1,6-bisphosphate aldolase KbaYZ that is required for full activity and stability of the Y subunit. Could have a chaperone-like function for the proper and stable folding of KbaY. When expressed alone, KbaZ does not show any aldolase activity. This chain is D-tagatose-1,6-bisphosphate aldolase subunit KbaZ, found in Escherichia coli O8 (strain IAI1).